The chain runs to 231 residues: Ion-translocating oxidoreductase complex subunit E (231 aa).

The next 6 membrane-spanning stretches (helical) occupy residues 18–38 (ALVQ…ATNA), 39–59 (LGLG…ISTL), 63–83 (TPAE…VSAV), 86–106 (LINA…PLIV), 125–145 (ALSA…MFVL), and 182–202 (PFLL…MLAG).

It belongs to the NqrDE/RnfAE family. The complex is composed of six subunits: RsxA, RsxB, RsxC, RsxD, RsxE and RsxG.

It is found in the cell inner membrane. Its function is as follows. Part of a membrane-bound complex that couples electron transfer with translocation of ions across the membrane. Required to maintain the reduced state of SoxR. The chain is Ion-translocating oxidoreductase complex subunit E from Shigella flexneri serotype 5b (strain 8401).